A 93-amino-acid polypeptide reads, in one-letter code: Large ribosomal subunit protein uL23cz/uL23cy (93 aa).

This sequence belongs to the universal ribosomal protein uL23 family. In terms of assembly, part of the 50S ribosomal subunit.

It is found in the plastid. Its subcellular location is the chloroplast. In terms of biological role, binds to 23S rRNA. In Nymphaea alba (White water-lily), this protein is Large ribosomal subunit protein uL23cz/uL23cy (rpl23-A).